Here is a 116-residue protein sequence, read N- to C-terminus: UPF0482 protein ECA2253 (116 aa).

The N-terminal stretch at 1–31 is a signal peptide; sequence MNHYSFSSLIRALIPLSLVIVSAVWQPAALA.

Belongs to the UPF0482 family.

In Pectobacterium atrosepticum (strain SCRI 1043 / ATCC BAA-672) (Erwinia carotovora subsp. atroseptica), this protein is UPF0482 protein ECA2253.